A 307-amino-acid chain; its full sequence is MSEKLVEVKDLEISFGEGKKKFVAVKNANFFIKKGETFSLVGESGSGKTTIGRAIIGLNDTSSGQILYDGKVINGRKSKSEANELIRKIQMIFQDPAASLNERATVDYIISEGLYNFNLFKTEEERKEKIKNMMAEVGLLSEHLTRYPHEFSGGQRQRIGIARALVMNPEFVIADEPISALDVSVRAQVLNLLKRMQAEKGLTYLFIAHDLSVVRFISDRIAVIHKGVIVEVAETEELFNNPIHPYTQSLLSAVPIPDPILERQKELVVYHPDQHDYTLDKPSMVEIKPNHFVWANQAEIEKYQKEL.

Residues 6–251 (VEVKDLEISF…PIHPYTQSLL (246 aa)) form the ABC transporter domain. Residue 42–49 (GESGSGKT) participates in ATP binding.

The protein belongs to the ABC transporter superfamily. As to quaternary structure, the complex is composed of two ATP-binding proteins (OppD and OppF), two transmembrane proteins (OppB and OppC) and a solute-binding protein (OppA).

The protein resides in the cell membrane. The enzyme catalyses a [peptide](out) + ATP + H2O = a [peptide](in) + ADP + phosphate + H(+). Part of the ABC transporter complex OppABCDF involved in the uptake of oligopeptides. Probably responsible for energy coupling to the transport system. The sequence is that of Oligopeptide transport ATP-binding protein OppF (oppF) from Streptococcus pyogenes serotype M1.